The chain runs to 940 residues: AP-2 complex subunit alpha (940 aa).

Phosphoserine is present on residues Ser-632 and Ser-634. A compositionally biased stretch (polar residues) spans Ser-651–Thr-662. Residues Ser-651–Ser-679 are disordered. Positions Ser-668–Ser-679 are enriched in low complexity.

It belongs to the adaptor complexes large subunit family. Adaptor protein complex 2 (AP-2) is a heterotetramer composed of two large adaptins (alpha-type and beta-type subunits), a medium adaptin (mu-type subunit AP50) and a small adaptin (sigma-type subunit AP17). As to expression, expressed in the Garland cells, imaginal disks, adult midgut precursors, the antenno-maxillary complex, the endoderm, the fat bodies, and the visceral mesoderm and cells of the CNS and PNS including neuroblasts, the presumptive stomatogastric nervous system, and the lateral chordotonal sense organs.

It localises to the cell membrane. The protein resides in the membrane. Its subcellular location is the coated pit. Functionally, adaptins are components of the adapter complexes which link clathrin to receptors in coated vesicles. Clathrin-associated protein complexes are believed to interact with the cytoplasmic tails of membrane proteins, leading to their selection and concentration. AP-2alpha is a subunit of the plasma membrane adapter. This chain is AP-2 complex subunit alpha (AP-2alpha), found in Drosophila melanogaster (Fruit fly).